The primary structure comprises 286 residues: Polyamine aminopropyltransferase (286 aa).

A PABS domain is found at 5 to 238 (PLWHETLHDH…GIMTFAWASD (234 aa)). Glutamine 33 contacts S-methyl-5'-thioadenosine. Spermidine is bound by residues histidine 64 and aspartate 88. S-methyl-5'-thioadenosine is bound by residues glutamate 108 and 140–141 (DG). The active-site Proton acceptor is aspartate 158. 158–161 (DCTD) contributes to the spermidine binding site. Proline 165 contributes to the S-methyl-5'-thioadenosine binding site.

It belongs to the spermidine/spermine synthase family. As to quaternary structure, homodimer or homotetramer.

It localises to the cytoplasm. The enzyme catalyses S-adenosyl 3-(methylsulfanyl)propylamine + putrescine = S-methyl-5'-thioadenosine + spermidine + H(+). The protein operates within amine and polyamine biosynthesis; spermidine biosynthesis; spermidine from putrescine: step 1/1. Catalyzes the irreversible transfer of a propylamine group from the amino donor S-adenosylmethioninamine (decarboxy-AdoMet) to putrescine (1,4-diaminobutane) to yield spermidine. In Klebsiella pneumoniae (strain 342), this protein is Polyamine aminopropyltransferase.